A 1285-amino-acid polypeptide reads, in one-letter code: Nuclear pore complex protein NUP133 (1285 aa).

Disordered regions lie at residues 1 to 53 (MFSP…PAPW) and 522 to 580 (EPPE…QTAR). Residues 31-41 (TPATQNRNNFI) show a composition bias toward polar residues. Composition is skewed to basic and acidic residues over residues 523–544 (PPER…DETR) and 553–569 (TAGR…DKGN).

Belongs to the nucleoporin Nup133 family. As to quaternary structure, part of the nuclear pore complex (NPC). The NPC has an eight-fold symmetrical structure comprising a central transport channel and two rings, the cytoplasmic and nuclear rings, to which eight filaments are attached. The cytoplasmic filaments have loose ends, while the nuclear filaments are joined in a distal ring, forming a nuclear basket. NPCs are highly dynamic in configuration and composition, and can be devided in 3 subcomplexes, the NUP62 subcomplex, the NUP107-160 subcomplex and the NUP93 subcomplex, containing approximately 30 different nucleoporin proteins.

It localises to the nucleus envelope. Its subcellular location is the nucleus. The protein localises to the nuclear pore complex. This chain is Nuclear pore complex protein NUP133, found in Arabidopsis thaliana (Mouse-ear cress).